The primary structure comprises 157 residues: Protein Smg (157 aa).

Belongs to the Smg family.

This chain is Protein Smg, found in Salmonella agona (strain SL483).